Consider the following 155-residue polypeptide: Endoribonuclease YbeY (155 aa).

Positions 114, 118, and 124 each coordinate Zn(2+).

It belongs to the endoribonuclease YbeY family. Zn(2+) is required as a cofactor.

It localises to the cytoplasm. Its function is as follows. Single strand-specific metallo-endoribonuclease involved in late-stage 70S ribosome quality control and in maturation of the 3' terminus of the 16S rRNA. The sequence is that of Endoribonuclease YbeY from Buchnera aphidicola subsp. Acyrthosiphon pisum (strain APS) (Acyrthosiphon pisum symbiotic bacterium).